A 406-amino-acid polypeptide reads, in one-letter code: Terminal uridylyltransferase 7 (406 aa).

Residues 1-15 constitute a mitochondrion transit peptide; the sequence is MNVAKREFIRGMMAH. UTP is bound by residues Ser-54 and 64–65; that span reads SD. Mg(2+) contacts are provided by Asp-65 and Asp-67. UTP contacts are provided by residues 138–142, Lys-164, Lys-168, and 181–183; these read GVENS and NSF.

This sequence belongs to the DNA polymerase type-B-like family. In terms of assembly, component of the mitochondrial RNA editing core complex-like (RECC-like), also known as the editosome-like complex; only a small proportion of MEAT1 associates with the complex. Interacts with RNA-editing ligase REL1. Mg(2+) serves as cofactor.

It localises to the mitochondrion matrix. It catalyses the reaction RNA(n) + UTP = RNA(n)-3'-uridine ribonucleotide + diphosphate. In terms of biological role, terminal uridylyltransferase which, as part of the mitochondrial RNA editing core-like complex (RECC-like), is involved in the post-transcriptional editing of mitochondrial RNA, a process involving the addition and deletion of uridine (U) nucleotides in the pre-mRNA. Specifically, catalyzes the addition of U to single-stranded RNA with a preference for a 3'-terminal U and adds the number of Us specified by a guide RNA (gRNA) to precleaved double-stranded RNA editing substrates. Essential for insect and bloodstream developmental forms viability. The sequence is that of Terminal uridylyltransferase 7 from Trypanosoma brucei brucei.